Reading from the N-terminus, the 1045-residue chain is Septation initiation network scaffold protein cdc11 (1045 aa).

A compositionally biased stretch (basic and acidic residues) spans 1-11 (MEQLWLEHDLS). 2 disordered regions span residues 1–269 (MEQL…NTKD) and 282–329 (RGRM…PSLS). The span at 18–39 (PQEQGSDNSSEPPTTSNVNNTQ) shows a compositional bias: polar residues. Low complexity-rich tracts occupy residues 40–52 (STGR…STEH), 96–132 (KQSP…NVSN), and 152–165 (ISSS…SEGS). The span at 166–176 (LKSQQSNTRSN) shows a compositional bias: polar residues. Residues 187 to 201 (ASNASSSSSVVSSPS) are compositionally biased toward low complexity. Composition is skewed to polar residues over residues 226 to 238 (NQLT…NSFE) and 320 to 329 (DSSNAFPSLS). A Phosphoserine modification is found at serine 360. Residues 377–417 (DVGSSQSSSKTARLNSSPKSTLKTSSVKTRRSHSAQSSRKV) are disordered. Residues 379-403 (GSSQSSSKTARLNSSPKSTLKTSSV) are compositionally biased toward polar residues. A Phosphoserine modification is found at serine 558. LRR repeat units follow at residues 604–625 (RIIQ…SELC), 627–646 (SIEE…GCPV), 647–668 (TIRD…SNLL), 669–690 (NLQY…SSLI), 691–712 (HLRE…QHLD), 713–734 (GLLK…NSNL), 736–757 (RLEE…SSLQ), 758–779 (NLMV…QPMI), 780–801 (HLRI…QFPH), 802–822 (LRTL…RRLK), 846–867 (DIRN…HMFL), 868–889 (GVRY…IATS), 892–913 (NLRV…KPLQ), 914–935 (MIHR…CDIL), and 940–962 (QLNV…IDDS). The region spanning 1005 to 1043 (AWRTRRKMYAEAILLACPHLEWLDGSDVSQSSRAAFTKS) is the LRRCT domain.

As to quaternary structure, interacts with sid4. When hyperphosphorylated, interacts with byr4. Also interacts with spg1, sid2, cdc13 and cdc16. Phosphorylated by cdc7 and cdk1. Hyperphosphorylated during anaphase. Dephosphorylated by par1.

The protein localises to the cytoplasm. The protein resides in the cytoskeleton. Its subcellular location is the microtubule organizing center. It is found in the spindle pole body. Its function is as follows. Essential for the onset of septum formation. Involved in the organization of astral microtubules during mitosis. Acts as a bridge between sid4 and the other SIN proteins mediating their association with the spindle pole body (SPB). The sid4-cdc11 complex organizes a signaling hub on the SPB which coordinates cell and nuclear division. The chain is Septation initiation network scaffold protein cdc11 (cdc11) from Schizosaccharomyces pombe (strain 972 / ATCC 24843) (Fission yeast).